We begin with the raw amino-acid sequence, 25 residues long: Caerin-1.19 (25 aa).

Residue Leu-25 is modified to Leucine amide.

Belongs to the frog skin active peptide (FSAP) family. Caerin subfamily. In terms of tissue distribution, expressed by the skin dorsal glands.

Its subcellular location is the secreted. Functionally, caerin-1.19 shows significant activity against Gram-positive organisms, but is less effective against Gram-negative organisms. This chain is Caerin-1.19, found in Ranoidea gracilenta (Dainty green tree frog).